The chain runs to 408 residues: Protein trichome birefringence-like 14 (408 aa).

A helical; Signal-anchor for type II membrane protein transmembrane segment spans residues Gly-11–Glu-31. Residues Gly-131–Ser-133 carry the GDS motif motif. The DCXHWCLPGXXDXWN motif motif lies at Asp-387–Asn-401.

This sequence belongs to the PC-esterase family. TBL subfamily.

Its subcellular location is the membrane. May act as a bridging protein that binds pectin and other cell wall polysaccharides. Probably involved in maintaining esterification of pectins. May be involved in the specific O-acetylation of cell wall polymers. In Arabidopsis thaliana (Mouse-ear cress), this protein is Protein trichome birefringence-like 14 (TBL14).